Consider the following 618-residue polypeptide: Chaperone protein HtpG (618 aa).

Residues Met1–Arg340 form an a; substrate-binding region. Positions Glu341–Asn545 are b. A c region spans residues Leu546–Leu618.

The protein belongs to the heat shock protein 90 family. As to quaternary structure, homodimer.

It is found in the cytoplasm. Its function is as follows. Molecular chaperone. Has ATPase activity. This Helicobacter hepaticus (strain ATCC 51449 / 3B1) protein is Chaperone protein HtpG.